The chain runs to 86 residues: Acyl-CoA-binding protein homolog 1 (86 aa).

Positions 1 to 86 (MTLSFDDAAA…VEELIAKYGA (86 aa)) constitute an ACB domain. An acyl-CoA-binding positions include Lys-13, 28-32 (YALFK), Lys-50, Lys-54, and Tyr-73.

The protein belongs to the ACBP family.

Its function is as follows. Binds medium- and long-chain acyl-CoA esters with very high affinity and may function as an intracellular carrier of acyl-CoA esters. The polypeptide is Acyl-CoA-binding protein homolog 1 (acbp-1) (Caenorhabditis elegans).